A 245-amino-acid chain; its full sequence is 14-3-3 protein zeta/delta (245 aa).

N-acetylmethionine is present on Met1. The residue at position 3 (Lys3) is an N6-acetyllysine. Ser58 carries the phosphoserine; by PKA modification. Lys68 is subject to N6-acetyllysine. Residues Ser184, Ser207, and Ser210 each carry the phosphoserine modification. A Phosphothreonine; by CK1 modification is found at Thr232.

It belongs to the 14-3-3 family. In terms of assembly, homodimer. Heterodimerizes with YWHAE. Homo- and heterodimerization is inhibited by phosphorylation on Ser-58. Interacts with FOXO4, NOXA1, SSH1 and ARHGEF2. Interacts with CDK16 and with WEE1 (C-terminal). Interacts with MLF1 (phosphorylated form); the interaction retains it in the cytoplasm. Interacts with BSPRY. Interacts with Thr-phosphorylated ITGB2. Interacts with Pseudomonas aeruginosa exoS (unphosphorylated form). Interacts with BAX; the interaction occurs in the cytoplasm. Under stress conditions, MAPK8-mediated phosphorylation releases BAX to mitochondria. Interacts with phosphorylated RAF1; the interaction is inhibited when YWHAZ is phosphorylated on Thr-232. Interacts with TP53; the interaction enhances p53 transcriptional activity. The Ser-58 phosphorylated form inhibits this interaction and p53 transcriptional activity. Interacts with ABL1 (phosphorylated form); the interaction retains ABL1 in the cytoplasm. Interacts with PKA-phosphorylated AANAT; the interaction modulates AANAT enzymatic activity by increasing affinity for arylalkylamines and acetyl-CoA and protecting the enzyme from dephosphorylation and proteasomal degradation. It may also prevent thiol-dependent inactivation. Interacts with AKT1; the interaction phosphorylates YWHAZ and modulates dimerization. Interacts with GAB2. Interacts with SAMSN1. Interacts with BCL2L11 and TLK2. Interacts with the 'Thr-369' phosphorylated form of DAPK2. Interacts with PI4KB, TBC1D22A and TBC1D22B. Interacts with ZFP36L1 (via phosphorylated form); this interaction occurs in a p38 MAPK- and AKT-signaling pathways. Interacts with SLITRK1. Interacts with AK5, LDB1, MADD, PDE1A and SMARCB1. Interacts with ARHGEF7 and GIT1. Interacts with MEFV. Interacts with ADAM22 (via C-terminus). Post-translationally, the delta, brain-specific form differs from the zeta form in being phosphorylated. Phosphorylation on Ser-184 by MAPK8; promotes dissociation of BAX and translocation of BAX to mitochondria. Phosphorylation on Thr-232; inhibits binding of RAF1. Phosphorylated on Ser-58 by PKA and protein kinase C delta type catalytic subunit in a sphingosine-dependent fashion. Phosphorylation on Ser-58 by PKA; disrupts homodimerization and heterodimerization with YHAE and TP53.

The protein resides in the cytoplasm. It is found in the melanosome. Its function is as follows. Adapter protein implicated in the regulation of a large spectrum of both general and specialized signaling pathways. Binds to a large number of partners, usually by recognition of a phosphoserine or phosphothreonine motif. Binding generally results in the modulation of the activity of the binding partner. Promotes cytosolic retention and inactivation of TFEB transcription factor by binding to phosphorylated TFEB. Induces ARHGEF7 activity on RAC1 as well as lamellipodia and membrane ruffle formation. In neurons, regulates spine maturation through the modulation of ARHGEF7 activity. The sequence is that of 14-3-3 protein zeta/delta (Ywhaz) from Mus musculus (Mouse).